The chain runs to 759 residues: LIM domain and actin-binding protein 1 (759 aa).

Methionine 1 is modified (N-acetylmethionine). Phosphoserine occurs at positions 4, 15, and 55. Residues 78–131 (NPGLGAESHTDSLRNSSTEIRHRADHPPAEVTSHAASGAKADQEEQIHPRSRLR) are disordered. A compositionally biased stretch (basic and acidic residues) spans 96 to 105 (EIRHRADHPP). The residue at position 132 (serine 132) is a Phosphoserine. Residues 146 to 177 (KDGEDLKDHSTESKKMENCLGESRHEVEKSEI) are compositionally biased toward basic and acidic residues. The disordered stretch occupies residues 146 to 182 (KDGEDLKDHSTESKKMENCLGESRHEVEKSEISENTD). The Required for interaction with NPC1L1 motif lies at 164 to 166 (CLG). Phosphoserine occurs at positions 183 and 225. Disordered regions lie at residues 211–264 (ILRA…RLSE) and 323–381 (EKIS…AMKK). A Phosphotyrosine modification is found at tyrosine 229. Phosphoserine occurs at positions 230 and 242. The segment covering 247 to 258 (DSEKNESRRNLE) has biased composition (basic and acidic residues). Phosphoserine is present on residues serine 263, serine 343, serine 350, serine 362, serine 365, serine 369, and serine 374. Positions 362–376 (SPDSRASSLSESSPP) are enriched in low complexity. In terms of domain architecture, LIM zinc-binding spans 388–448 (ETCVECQKTV…KPHFNQLFKS (61 aa)). At lysine 439 the chain carries N6-succinyllysine. Serine 490 carries the phosphoserine modification. A required for interaction with MYO5B region spans residues 493–513 (VEDAPIAKVGVLAASMEAKAS). Residues 509-709 (EAKASSQQEK…QEPKSLNWSS (201 aa)) form a disordered region. Basic and acidic residues-rich tracts occupy residues 516-527 (QEKEDKPAETKK) and 556-567 (WPPEDEISKPEV). Polar residues predominate over residues 595–607 (ASFQSTSVKSPKT). Phosphoserine occurs at positions 601, 604, 609, and 617. Positions 644–655 (KNGNVGKTTWQN) are enriched in polar residues. The segment covering 656–673 (KESKGETGKRSKEGHSLE) has biased composition (basic and acidic residues). Over residues 674–691 (MENENLVENGADSDEDDN) the composition is skewed to acidic residues. Serine 686, serine 692, serine 698, serine 726, and serine 741 each carry phosphoserine. Positions 693-709 (FLKQQSPQEPKSLNWSS) are enriched in polar residues.

Interacts with NPC1L1; bridges NPC1L1 with MYO5B. Interacts with MYO5B; bridges NPC1L1 with MYO5B. Interacts with PXN; this complex stabilizes actin dynamics. Interacts with F-actin and G-actin. Interacts with LUZP1 (via C-terminus); both proteins restrict ciliation and may work together to regulate this process. Binds RAB40B (GTP-bound); interaction influences LIMA1 subcellular localization in lamellipodia during cell migration. Post-translationally, ubiquitinated by the ECS(RAB40B) complex leading to its degradation. In terms of processing, phosphorylation of the C-terminal region by MAPK1/MAPK3 reduces its association with F-actin and contributes to actin filament reorganization and enhances cell motility. In terms of tissue distribution, highly expressed in placenta, kidney, pancreas, prostate, ovary, spleen and heart. Also detected in lung, liver, brain, skeletal muscle, thymus, testis and intestine. Not detected in leukocytes. Isoform Beta expressed generally at very low levels. Isoform Alpha abundant in epithelial cells from mammary gland, prostate and in normal oral keratinocytes. Low levels in aortic endothelial cells and dermal fibroblasts. Not detectable in myocardium.

Its subcellular location is the cytoplasm. It is found in the cell junction. It localises to the focal adhesion. The protein localises to the cytoskeleton. The protein resides in the stress fiber. Its subcellular location is the cell membrane. It is found in the cell projection. It localises to the ruffle. The protein localises to the lamellipodium. Its function is as follows. Actin-binding protein involved in actin cytoskeleton regulation and dynamics. Increases the number and size of actin stress fibers and inhibits membrane ruffling. Inhibits actin filament depolymerization. Bundles actin filaments, delays filament nucleation and reduces formation of branched filaments. Acts as a negative regulator of primary cilium formation. Plays a role in cholesterol homeostasis. Influences plasma cholesterol levels through regulation of intestinal cholesterol absorption. May act as a scaffold protein by regulating NPC1L1 transportation, an essential protein for cholesterol absorption, to the plasma membrane by recruiting MYO5B to NPC1L1, and thus facilitates cholesterol uptake. The polypeptide is LIM domain and actin-binding protein 1 (Homo sapiens (Human)).